The sequence spans 195 residues: Apoptosis-associated speck-like protein containing a CARD (195 aa).

A Pyrin domain is found at 1–91; it reads MGCTRDAILD…AEQLQETMSK (91 aa). Residues lysine 55 and lysine 174 each participate in a glycyl lysine isopeptide (Lys-Gly) (interchain with G-Cter in ubiquitin) cross-link. The region spanning 107–195 is the CARD domain; the sequence is TAKPGLHFVD…PYLVDDLEQS (89 aa). Serine 195 is modified (phosphoserine).

Self-associates; enforced oligomerization induces apoptosis, NF-kappa-B regulation and interleukin-1 beta secretion. Homooligomers can form disk-like particles of approximately 12 nm diameter and approximately 1 nm height. Component of several inflammasomes containing one pattern recognition receptor/sensor, such as NLRP1, NLRP2, NLRP3, NLRP6, NLRC4, AIM2, MEFV or NOD2, and probably NLRC4 or NLRP12. Major component of the ASC pyroptosome, a 1-2 um supramolecular assembly (one per macrophage cell) which consists of oligomerized PYCARD dimers and CASP1. Interacts with CASP1 (precursor form); the interaction induces activation of CASP1 leading to the processing of interleukin-1 beta; PYCARD competes with RIPK2 for binding to CASP1. Interacts with NLRP3; the interaction requires the homooligomerization of NLRP3. Interacts with NLRP2, NLRC4, MEFV, CARD16, AIM2, NOD2, RIGI, RIPK2, PYDC1, PYDC2, NLRP10, CASP8, CHUK, IKBKB and BAX. Component of the AIM2 PANoptosome complex, a multiprotein complex that drives inflammatory cell death (PANoptosis). Post-translationally, phosphorylated. 'Lys-63'-linked polyubiquitination by TRAF3 is critical for speck formation and inflammasome activation. 'Lys-63'-linked deubiquitinated by USP50; a crucial step for NLRP3-mediated inflammasome activation. 'Lys-63'-linked polyubiquitination by PELI1 is also critical for speck formation and inflammasome activation. Deubiquitinated by USP3 that cleaves 'Lys-48'-linked ubiquitin chains and strengthens its stability by blocking proteasomal degradation.

It localises to the cytoplasm. The protein resides in the inflammasome. It is found in the endoplasmic reticulum. The protein localises to the mitochondrion. Its subcellular location is the nucleus. Functions as a key mediator in apoptosis and inflammation. Promotes caspase-mediated apoptosis involving predominantly caspase-8 and also caspase-9 in a probable cell type-specific manner. Involved in activation of the mitochondrial apoptotic pathway, promotes caspase-8-dependent proteolytic maturation of BID independently of FADD in certain cell types and also mediates mitochondrial translocation of BAX and activates BAX-dependent apoptosis coupled to activation of caspase-9, -2 and -3. Involved in innate immune response by acting as an integral adapter in the assembly of various inflammasomes (NLRP2, NLRP3, NLRP6 and AIM2) which recruit and activate caspase-1 leading to processing and secretion of pro-inflammatory cytokines. Caspase-1-dependent inflammation leads to macrophage pyroptosis, a form of cell death. The function as activating adapter in different types of inflammasomes is mediated by the pyrin and CARD domains and their homotypic interactions. Clustered PYCARD nucleates the formation of caspase-1 filaments through the interaction of their respective CARD domains, acting as a platform for of caspase-1 polymerization. In the NLRC4 inflammasomes seems not be required but facilitates the processing of procaspase-1. In cooperation with NOD2 involved in an inflammasome activated by bacterial muramyl dipeptide leading to caspase-1 activation. May be involved in RIGI-triggered pro-inflammatory responses and inflammasome activation. In collaboration with AIM2 which detects cytosolic double-stranded DNA may also be involved in a caspase-1-independent cell death that involves caspase-8. In adaptive immunity may be involved in maturation of dendritic cells to stimulate T-cell immunity and in cytoskeletal rearrangements coupled to chemotaxis and antigen uptake may be involved in post-transcriptional regulation of the guanine nucleotide exchange factor DOCK2; the latter function is proposed to involve the nuclear form. Also involved in transcriptional activation of cytokines and chemokines independent of the inflammasome; this function may involve AP-1, NF-kappa-B, MAPK and caspase-8 signaling pathways. For regulation of NF-kappa-B activating and inhibiting functions have been reported. Modulates NF-kappa-B induction at the level of the IKK complex by inhibiting kinase activity of CHUK and IKBK. Proposed to compete with RIPK2 for association with CASP1 thereby down-regulating CASP1-mediated RIPK2-dependent NF-kappa-B activation and activating interleukin-1 beta processing. Modulates host resistance to DNA virus infection, probably by inducing the cleavage of and inactivating CGAS in presence of cytoplasmic double-stranded DNA. The polypeptide is Apoptosis-associated speck-like protein containing a CARD (PYCARD) (Bos taurus (Bovine)).